We begin with the raw amino-acid sequence, 587 residues long: Thioredoxin domain-containing protein 3 (587 aa).

The region spanning 2–119 (ASKKREVQLQ…VIALIDEEKK (118 aa)) is the Thioredoxin domain. A disulfide bridge connects residues cysteine 39 and cysteine 42. NDK regions lie at residues 157-255 (MAVI…PLEE), 313-453 (VQRT…STLA), and 454-587 (LIKP…NFEN).

This sequence in the C-terminal section; belongs to the NDK family. In terms of assembly, monomer. Testis-specific.

The protein localises to the cytoplasm. Probably required during the final stages of sperm tail maturation in the testis and/or epididymis, where extensive disulfide bonding of fibrous sheath (FS) proteins occurs. In vitro, it has neither nucleoside diphosphate kinase (NDPK) activity nor reducing activity on disulfide bonds. Exhibits a 3'-5' exonuclease activity with a preference for single-stranded DNA, suggesting roles in DNA proofreading and repair. The sequence is that of Thioredoxin domain-containing protein 3 (Nme8) from Rattus norvegicus (Rat).